Reading from the N-terminus, the 513-residue chain is Alpha-amylase mde5 (513 aa).

A signal peptide spans 1–25 (MKHNEVFGWTLKVLSFLLVVIPANA). The cysteines at positions 52 and 60 are disulfide-linked. Position 105 (Trp-105) interacts with substrate. Asn-143 contributes to the Ca(2+) binding site. Residue His-144 coordinates substrate. Asn-162 carries N-linked (GlcNAc...) asparagine glycosylation. Cys-171 and Cys-184 are joined by a disulfide. 2 residues coordinate Ca(2+): Glu-182 and Asp-195. Arg-224 lines the substrate pocket. The Ca(2+) site is built by Asp-226, His-230, and Glu-250. Asp-226 (nucleophile) is an active-site residue. 229–230 (KH) serves as a coordination point for substrate. Catalysis depends on Glu-250, which acts as the Proton donor. Gly-254 is a substrate binding site. A disulfide bond links Cys-260 and Cys-304. Residue Asp-318 participates in substrate binding. Asn-357 is a glycosylation site (N-linked (GlcNAc...) asparagine). Position 365 (Arg-365) interacts with substrate. The cysteines at positions 454 and 488 are disulfide-linked.

This sequence belongs to the glycosyl hydrolase 13 family. Requires Ca(2+) as cofactor.

The protein resides in the endoplasmic reticulum. The catalysed reaction is Endohydrolysis of (1-&gt;4)-alpha-D-glucosidic linkages in polysaccharides containing three or more (1-&gt;4)-alpha-linked D-glucose units.. The chain is Alpha-amylase mde5 (mde5) from Schizosaccharomyces pombe (strain 972 / ATCC 24843) (Fission yeast).